Reading from the N-terminus, the 197-residue chain is Putative sulfur carrier protein aq_1421 (197 aa).

Residue Cys17 is the Cysteine persulfide intermediate of the active site.

It belongs to the sulfur carrier protein TusA family.

The polypeptide is Putative sulfur carrier protein aq_1421 (Aquifex aeolicus (strain VF5)).